Reading from the N-terminus, the 166-residue chain is Holin-like protein TcdE (166 aa).

Transmembrane regions (helical) follow at residues 15 to 35, 36 to 56, 77 to 97, and 111 to 131; these read IFFYINLGGVMNMTISFLSEH, IFIKLVILTISFDTLLGCLSA, MIACIFFLSVVDILTKFNFLF, and HLGISEFFSILFILYESVSIL.

It belongs to the bacteriophage holin family. As to quaternary structure, homomultimer.

Its subcellular location is the cell membrane. Its function is as follows. Holin-like protein required for secretion of toxins A and B (TcdA and TcdB). Facilitates the release of toxins to the extracellular environment without causing the bacterial cell lysis. Has weak activity, suggesting that it may act as a antiholin when multiple forms are produced. The polypeptide is Holin-like protein TcdE (Clostridioides difficile (Peptoclostridium difficile)).